The chain runs to 801 residues: Mitochondrial intermediate peptidase (801 aa).

The N-terminal 41 residues, 1 to 41 (MKDQLLVPLRRRPWTCQKCLQRLQLPRHQTRRSFETAASPF), are a transit peptide targeting the mitochondrion. A Zn(2+)-binding site is contributed by H564. The active site involves E565. Zn(2+) is bound by residues H568 and H571.

This sequence belongs to the peptidase M3 family. Requires Zn(2+) as cofactor.

Its subcellular location is the mitochondrion matrix. The catalysed reaction is Release of an N-terminal octapeptide as second stage of processing of some proteins imported into the mitochondrion.. In terms of biological role, cleaves proteins, imported into the mitochondrion, to their mature size. While most mitochondrial precursor proteins are processed to the mature form in one step by mitochondrial processing peptidase (MPP), the sequential cleavage by MIP of an octapeptide after initial processing by MPP is a required step for a subgroup of nuclear-encoded precursor proteins destined for the matrix or the inner membrane. The polypeptide is Mitochondrial intermediate peptidase (oct1) (Aspergillus fumigatus (strain CBS 144.89 / FGSC A1163 / CEA10) (Neosartorya fumigata)).